A 130-amino-acid polypeptide reads, in one-letter code: Protein ApaG (130 aa).

The ApaG domain maps to 3–127 (RAVTRQIEVL…FSLDSPDIRR (125 aa)).

The protein is Protein ApaG of Afipia carboxidovorans (strain ATCC 49405 / DSM 1227 / KCTC 32145 / OM5) (Oligotropha carboxidovorans).